Reading from the N-terminus, the 476-residue chain is BTB/POZ domain-containing protein KCTD8 (476 aa).

A BTB domain is found at 44-122 (EVVELNVGGQ…LRDKQLALPE (79 aa)). At S78 the chain carries Phosphoserine. The residue at position 80 (R80) is an Omega-N-methylarginine. The disordered stretch occupies residues 331 to 412 (SPKQEHEDRK…WMPPPDKRRN (82 aa)). The span at 333-349 (KQEHEDRKRDKVTDKGS) shows a compositional bias: basic and acidic residues. The span at 350–391 (ESGTSCNELSTSSCDSHSEASTPQDNPANTQQAAAHQPNTLT) shows a compositional bias: polar residues. At S413 the chain carries Phosphoserine.

As to quaternary structure, interacts as a tetramer with GABBR1 and GABBR2.

The protein resides in the presynaptic cell membrane. It is found in the postsynaptic cell membrane. Functionally, auxiliary subunit of GABA-B receptors that determine the pharmacology and kinetics of the receptor response. Increases agonist potency and markedly alter the G-protein signaling of the receptors by accelerating onset and promoting desensitization. The polypeptide is BTB/POZ domain-containing protein KCTD8 (Kctd8) (Mus musculus (Mouse)).